Reading from the N-terminus, the 260-residue chain is Pyridoxine 5'-phosphate synthase (260 aa).

3-amino-2-oxopropyl phosphate is bound at residue N15. A 1-deoxy-D-xylulose 5-phosphate-binding site is contributed by D17–H18. R26 is a 3-amino-2-oxopropyl phosphate binding site. Residue H51 is the Proton acceptor of the active site. R53 and H58 together coordinate 1-deoxy-D-xylulose 5-phosphate. The active-site Proton acceptor is the E78. T108 contacts 1-deoxy-D-xylulose 5-phosphate. H199 (proton donor) is an active-site residue. Residues G200 and G221–H222 each bind 3-amino-2-oxopropyl phosphate.

It belongs to the PNP synthase family. In terms of assembly, homooctamer; tetramer of dimers.

It is found in the cytoplasm. The catalysed reaction is 3-amino-2-oxopropyl phosphate + 1-deoxy-D-xylulose 5-phosphate = pyridoxine 5'-phosphate + phosphate + 2 H2O + H(+). Its pathway is cofactor biosynthesis; pyridoxine 5'-phosphate biosynthesis; pyridoxine 5'-phosphate from D-erythrose 4-phosphate: step 5/5. Catalyzes the complicated ring closure reaction between the two acyclic compounds 1-deoxy-D-xylulose-5-phosphate (DXP) and 3-amino-2-oxopropyl phosphate (1-amino-acetone-3-phosphate or AAP) to form pyridoxine 5'-phosphate (PNP) and inorganic phosphate. This is Pyridoxine 5'-phosphate synthase from Cupriavidus metallidurans (strain ATCC 43123 / DSM 2839 / NBRC 102507 / CH34) (Ralstonia metallidurans).